The following is a 1411-amino-acid chain: DNA-directed RNA polymerase subunit beta' (1411 aa).

Positions 70, 72, 85, and 88 each coordinate Zn(2+). Asp-458, Asp-460, and Asp-462 together coordinate Mg(2+). Positions 813, 887, 894, and 897 each coordinate Zn(2+). The disordered stretch occupies residues 1391-1411 (AQAEVPELDGSSVTASDAAAD).

Belongs to the RNA polymerase beta' chain family. In terms of assembly, the RNAP catalytic core consists of 2 alpha, 1 beta, 1 beta' and 1 omega subunit. When a sigma factor is associated with the core the holoenzyme is formed, which can initiate transcription. It depends on Mg(2+) as a cofactor. Zn(2+) serves as cofactor.

It catalyses the reaction RNA(n) + a ribonucleoside 5'-triphosphate = RNA(n+1) + diphosphate. In terms of biological role, DNA-dependent RNA polymerase catalyzes the transcription of DNA into RNA using the four ribonucleoside triphosphates as substrates. The sequence is that of DNA-directed RNA polymerase subunit beta' from Verminephrobacter eiseniae (strain EF01-2).